Consider the following 80-residue polypeptide: Trefoil factor 3 (80 aa).

Positions methionine 1–alanine 21 are cleaved as a signal peptide. The P-type domain maps to asparagine 30–leucine 73. 3 disulfide bridges follow: cysteine 32-cysteine 58, cysteine 42-cysteine 57, and cysteine 52-cysteine 69.

Monomer. Homodimer; disulfide-linked.

It is found in the secreted. The protein localises to the extracellular space. It localises to the extracellular matrix. The protein resides in the cytoplasm. Functionally, involved in the maintenance and repair of the intestinal mucosa. Promotes the mobility of epithelial cells in healing processes (motogen). The polypeptide is Trefoil factor 3 (TFF3) (Sus scrofa (Pig)).